The primary structure comprises 320 residues: Methylenetetrahydrofolate dehydrogenase [NAD(+)] (320 aa).

Residue Cys152 is part of the active site. NAD(+) is bound by residues 187 to 188 (RS) and 210 to 211 (DI).

It belongs to the tetrahydrofolate dehydrogenase/cyclohydrolase family. Homodimer.

The protein resides in the cytoplasm. The protein localises to the nucleus. The enzyme catalyses (6R)-5,10-methylene-5,6,7,8-tetrahydrofolate + NAD(+) = (6R)-5,10-methenyltetrahydrofolate + NADH. The protein operates within one-carbon metabolism; tetrahydrofolate interconversion. Catalyzes oxidation of cytoplasmic one-carbon units for purine biosynthesis. The protein is Methylenetetrahydrofolate dehydrogenase [NAD(+)] (mtd1) of Schizosaccharomyces pombe (strain 972 / ATCC 24843) (Fission yeast).